Here is a 115-residue protein sequence, read N- to C-terminus: C-C motif chemokine 6 (115 aa).

The signal sequence occupies residues methionine 1–alanine 21. Disulfide bonds link cysteine 49–cysteine 72, cysteine 50–cysteine 88, and cysteine 59–cysteine 99.

It belongs to the intercrine beta (chemokine CC) family.

It is found in the secreted. This Rattus norvegicus (Rat) protein is C-C motif chemokine 6 (Ccl6).